A 36-amino-acid chain; its full sequence is Dermonecrotic toxin LgSicTox-beta-LOXN1/LOXN7 (36 aa).

The protein belongs to the arthropod phospholipase D family. Class II subfamily. It depends on Mg(2+) as a cofactor. Post-translationally, contains 2 disulfide bonds. As to expression, expressed by the venom gland.

It localises to the secreted. It carries out the reaction an N-(acyl)-sphingosylphosphocholine = an N-(acyl)-sphingosyl-1,3-cyclic phosphate + choline. The enzyme catalyses an N-(acyl)-sphingosylphosphoethanolamine = an N-(acyl)-sphingosyl-1,3-cyclic phosphate + ethanolamine. The catalysed reaction is a 1-acyl-sn-glycero-3-phosphocholine = a 1-acyl-sn-glycero-2,3-cyclic phosphate + choline. It catalyses the reaction a 1-acyl-sn-glycero-3-phosphoethanolamine = a 1-acyl-sn-glycero-2,3-cyclic phosphate + ethanolamine. Dermonecrotic toxins cleave the phosphodiester linkage between the phosphate and headgroup of certain phospholipids (sphingolipid and lysolipid substrates), forming an alcohol (often choline) and a cyclic phosphate. This toxin acts on sphingomyelin (SM). It may also act on ceramide phosphoethanolamine (CPE), lysophosphatidylcholine (LPC) and lysophosphatidylethanolamine (LPE), but not on lysophosphatidylserine (LPS), and lysophosphatidylglycerol (LPG). It acts by transphosphatidylation, releasing exclusively cyclic phosphate products as second products. Induces dermonecrosis, hemolysis, increased vascular permeability, edema, inflammatory response, and platelet aggregation. This chain is Dermonecrotic toxin LgSicTox-beta-LOXN1/LOXN7, found in Loxosceles gaucho (Spider).